The following is a 355-amino-acid chain: Arginine kinase (355 aa).

One can recognise a Phosphagen kinase N-terminal domain in the interval 8–90; the sequence is KLQAGFKKLE…FDPIIEDYHV (83 aa). 63–67 contributes to the L-arginine binding site; it reads GVGIY. In terms of domain architecture, Phosphagen kinase C-terminal spans 118 to 355; it reads YVISTRVRCG…LQLIKMEKEM (238 aa). Residues 121 to 125 and His184 each bind ATP; that span reads STRVR. Position 224 (Glu224) interacts with L-arginine. Arg228 serves as a coordination point for ATP. Residue Cys270 participates in L-arginine binding. Residues 279–283 and 308–313 each bind ATP; these read RASVH and RGTRGE. Glu313 lines the L-arginine pocket.

It belongs to the ATP:guanido phosphotransferase family. As to quaternary structure, monomer.

The catalysed reaction is L-arginine + ATP = N(omega)-phospho-L-arginine + ADP + H(+). In Penaeus japonicus (Kuruma prawn), this protein is Arginine kinase.